The sequence spans 181 residues: Protein Syd (181 aa).

Belongs to the Syd family.

Its subcellular location is the cell inner membrane. Functionally, interacts with the SecY protein in vivo. May bind preferentially to an uncomplexed state of SecY, thus functioning either as a chelating agent for excess SecY in the cell or as a regulatory factor that negatively controls the translocase function. The protein is Protein Syd of Shigella flexneri.